A 504-amino-acid chain; its full sequence is Glucose-6-phosphate isomerase (504 aa).

E333 (proton donor) is an active-site residue. Residues H364 and K473 contribute to the active site.

It belongs to the GPI family.

It localises to the cytoplasm. It catalyses the reaction alpha-D-glucose 6-phosphate = beta-D-fructose 6-phosphate. It functions in the pathway carbohydrate biosynthesis; gluconeogenesis. It participates in carbohydrate degradation; glycolysis; D-glyceraldehyde 3-phosphate and glycerone phosphate from D-glucose: step 2/4. Catalyzes the reversible isomerization of glucose-6-phosphate to fructose-6-phosphate. The chain is Glucose-6-phosphate isomerase from Stenotrophomonas maltophilia (strain R551-3).